The chain runs to 340 residues: Hyaluronan and proteoglycan link protein 2 (340 aa).

Positions 1-26 (MPGWLTLPTLCRFLLWAFTIFHKAQG) are cleaved as a signal peptide. The 111-residue stretch at 34 to 144 (PHYLLPPIHE…EDESVALTLS (111 aa)) folds into the Ig-like V-type domain. Intrachain disulfides connect C57-C128, C170-C240, C194-C215, C265-C336, and C290-C311. 2 Link domains span residues 148–242 (VVFP…FCFT) and 245–338 (LAGQ…YCYA).

It belongs to the HAPLN family. In terms of tissue distribution, expressed only in adult brain.

The protein localises to the secreted. It localises to the extracellular space. It is found in the extracellular matrix. In terms of biological role, mediates a firm binding of versican V2 to hyaluronic acid. May play a pivotal role in the formation of the hyaluronan-associated matrix in the central nervous system (CNS) which facilitates neuronal conduction and general structural stabilization. Binds to hyaluronic acid. The chain is Hyaluronan and proteoglycan link protein 2 (HAPLN2) from Homo sapiens (Human).